The sequence spans 162 residues: AP-1 complex subunit sigma-1 (162 aa).

It belongs to the adaptor complexes small subunit family. As to quaternary structure, adaptor protein complex 1 (AP-1) is a heterotetramer composed of two large adaptins (gamma-type subunit apl4 and beta-type subunit apl2), a medium adaptin (mu-type subunit apm1) and a small adaptin (sigma-type subunit aps1). AP-1 interacts with clathrin.

Its subcellular location is the cytoplasm. The protein resides in the nucleus. It is found in the cytoplasmic vesicle. It localises to the clathrin-coated vesicle membrane. The protein localises to the endosome. Its subcellular location is the golgi apparatus. Component of the AP-1 complex which links clathrin to receptors in coated vesicles. Clathrin-associated protein complexes are believed to interact with the cytoplasmic tails of membrane proteins, leading to their selection and concentration. In Schizosaccharomyces pombe (strain 972 / ATCC 24843) (Fission yeast), this protein is AP-1 complex subunit sigma-1 (vas2).